The following is a 602-amino-acid chain: Elongation factor 4 (602 aa).

The tr-type G domain maps to 8–189; the sequence is KNIRNFSIIA…KIITTIPAPS (182 aa). GTP-binding positions include 20 to 25 and 136 to 139; these read DHGKST and NKID.

It belongs to the TRAFAC class translation factor GTPase superfamily. Classic translation factor GTPase family. LepA subfamily.

Its subcellular location is the cell inner membrane. It catalyses the reaction GTP + H2O = GDP + phosphate + H(+). Its function is as follows. Required for accurate and efficient protein synthesis under certain stress conditions. May act as a fidelity factor of the translation reaction, by catalyzing a one-codon backward translocation of tRNAs on improperly translocated ribosomes. Back-translocation proceeds from a post-translocation (POST) complex to a pre-translocation (PRE) complex, thus giving elongation factor G a second chance to translocate the tRNAs correctly. Binds to ribosomes in a GTP-dependent manner. The polypeptide is Elongation factor 4 (Helicobacter pylori (strain HPAG1)).